Here is a 464-residue protein sequence, read N- to C-terminus: Soluble pyridine nucleotide transhydrogenase (464 aa).

An FAD-binding site is contributed by 35-44; the sequence is DNRPLVGGNC.

This sequence belongs to the class-I pyridine nucleotide-disulfide oxidoreductase family. Requires FAD as cofactor.

The protein resides in the cytoplasm. It carries out the reaction NAD(+) + NADPH = NADH + NADP(+). Its function is as follows. Conversion of NADPH, generated by peripheral catabolic pathways, to NADH, which can enter the respiratory chain for energy generation. The polypeptide is Soluble pyridine nucleotide transhydrogenase (Stutzerimonas stutzeri (strain A1501) (Pseudomonas stutzeri)).